Consider the following 241-residue polypeptide: MSLTLLPAVDVRDGKAVRLRQGESGSETDYGSPFEAARTWVEAGAEWIHLVDLDAAFGTGNNRDQLREIVHELGDRVNIELSGGVRDDASLDAALEAGAARVNIGTAALENPDWTASVIKKYGDRVAVGLDVRGHTLAARGWTREGGDLFETMKFLDSVGCSRYVVTDVAKDGMMSGPNIQLLSEVAERTDAKVTASGGISKLDDLRAIKELAEIGVDSAILGKSLYARAFTLQEALEVAK.

The active-site Proton acceptor is the aspartate 10. Residue aspartate 131 is the Proton donor of the active site.

Belongs to the HisA/HisF family.

It is found in the cytoplasm. The catalysed reaction is 1-(5-phospho-beta-D-ribosyl)-5-[(5-phospho-beta-D-ribosylamino)methylideneamino]imidazole-4-carboxamide = 5-[(5-phospho-1-deoxy-D-ribulos-1-ylimino)methylamino]-1-(5-phospho-beta-D-ribosyl)imidazole-4-carboxamide. Its pathway is amino-acid biosynthesis; L-histidine biosynthesis; L-histidine from 5-phospho-alpha-D-ribose 1-diphosphate: step 4/9. The chain is 1-(5-phosphoribosyl)-5-[(5-phosphoribosylamino)methylideneamino] imidazole-4-carboxamide isomerase from Bifidobacterium longum (strain NCC 2705).